The sequence spans 423 residues: Core protease OPG082 (423 aa).

Active-site residues include H241, D248, and C328.

The protein belongs to the peptidase C57 family.

Its subcellular location is the virion. Functionally, late protein responsible for processing most or all of the viral core and membrane proteins known to undergo morphogenesis-associated proteolysis. These proteolytic events are involved in the transformation of immature virions (IV) into mature virions (MV). Probably cleaves at least the OPG129, OPG136, OPG098, and OPG144 precursors preferentially at Ala-Gly-|-Ala motifs. Also seems to process Ala-Gly-|-Ser and Ala-Gly-|-Thr motifs. The chain is Core protease OPG082 (OPG083) from Homo sapiens (Human).